Reading from the N-terminus, the 460-residue chain is Notoamide biosynthesis cluster transcriptional coactivator notR (460 aa).

One can recognise an HTH iclR-type domain in the interval 74–145 (LQDLARQVEI…EPMPNYVSHT (72 aa)). A DNA-binding region (H-T-H motif) is located at residues 107-126 (IQDLADLAGVPDIQLRRVIR). Residues 300–320 (TRDFTPQPESSPRPGSASSRV) are disordered.

The protein localises to the nucleus. In terms of biological role, transcription factor that probably regulates the expression of the gene cluster that mediates the biosynthesis of notoamide, a fungal indole alkaloid that belongs to a family of natural products containing a characteristic bicyclo[2.2.2]diazaoctane core. The polypeptide is Notoamide biosynthesis cluster transcriptional coactivator notR (Aspergillus sp. (strain MF297-2)).